The chain runs to 214 residues: tRNA (guanine-N(7)-)-methyltransferase (214 aa).

Residues Glu43, Glu68, Asp95, and Asp117 each coordinate S-adenosyl-L-methionine. Asp117 is a catalytic residue. Residues Lys121, Asp153, and 190-193 contribute to the substrate site; that span reads TEYE.

It belongs to the class I-like SAM-binding methyltransferase superfamily. TrmB family.

The enzyme catalyses guanosine(46) in tRNA + S-adenosyl-L-methionine = N(7)-methylguanosine(46) in tRNA + S-adenosyl-L-homocysteine. It functions in the pathway tRNA modification; N(7)-methylguanine-tRNA biosynthesis. Functionally, catalyzes the formation of N(7)-methylguanine at position 46 (m7G46) in tRNA. The protein is tRNA (guanine-N(7)-)-methyltransferase of Staphylococcus aureus (strain JH1).